The sequence spans 334 residues: Sensor protein BceS (334 aa).

Over 1–12 (MIKAFLIERRSW) the chain is Cytoplasmic. A helical membrane pass occupies residues 13–33 (IAAFLFQQALMLFIAFVDPSI). S34 is a topological domain (extracellular). The chain crosses the membrane as a helical span at residues 35-55 (FGNVLYMVYLCILFFIIFLWF). Residues 56 to 334 (RYRKETAFYK…RNQFEHVISV (279 aa)) are Cytoplasmic-facing. Positions 121–326 (AWIHEVKTPL…VFTLTFPIRN (206 aa)) constitute a Histidine kinase domain. H124 bears the Phosphohistidine; by autocatalysis mark.

It is found in the cell membrane. It catalyses the reaction ATP + protein L-histidine = ADP + protein N-phospho-L-histidine.. In terms of biological role, member of the two-component regulatory system BceS/BceR involved in the regulation of bacitracin resistance. Activates BceR in response to extracellular bacitracin. This is Sensor protein BceS (bceS) from Bacillus subtilis (strain 168).